The following is a 430-amino-acid chain: Adenylosuccinate synthetase (430 aa).

Residues 13–19 and 41–43 each bind GTP; these read GDEGKGK and GHT. D14 acts as the Proton acceptor in catalysis. Positions 14 and 41 each coordinate Mg(2+). IMP is bound by residues 14–17, 39–42, T130, R144, Q225, T240, and R304; these read DEGK and NAGH. The active-site Proton donor is the H42. 300–306 serves as a coordination point for substrate; that stretch reads ASTGRPR. GTP-binding positions include R306, 332–334, and 414–416; these read KLD and STG.

This sequence belongs to the adenylosuccinate synthetase family. In terms of assembly, homodimer. Mg(2+) is required as a cofactor.

The protein resides in the cytoplasm. The catalysed reaction is IMP + L-aspartate + GTP = N(6)-(1,2-dicarboxyethyl)-AMP + GDP + phosphate + 2 H(+). Its pathway is purine metabolism; AMP biosynthesis via de novo pathway; AMP from IMP: step 1/2. Functionally, plays an important role in the de novo pathway of purine nucleotide biosynthesis. Catalyzes the first committed step in the biosynthesis of AMP from IMP. The polypeptide is Adenylosuccinate synthetase (Xylella fastidiosa (strain 9a5c)).